The sequence spans 569 residues: MAAAAPVAADDDERRRRPGAALEDSRPQEGANGEAELGELSRLRAELAGALAEMETMKAVAEVSESTKAEAVAAVQRQCQEEVASLQAILKDSISSYEAQITALKQERQQQQQDCEEKERELGRLKQLLSRAHPLDSLEKQMEKAHEDSEKLREIVLPMEKEIEELKAKLLRAEELIQEIQRRPQHVPSLHGSTELLPLSRDPSPPLEPLEELSGDGGPAAEAFAHNCDDSASISSFSLGGGVGSSSSLPRSRQGLSPEQEETASLVSTGTLVPEGIYLPPPGYQLVPDTQWEQLQMEGRQLQKDLESVSRERDELQEGLRRSNEDCAKQMQVLLAQVQNAEQLLRTLQGTVSQAQERVQLQMAELVTTHKCLHHEVKRLNEENQGLRAEQLPSSAPQGPQQEQGEEESLPSSVPELQQLLCRTRQEARAQLQAQEHGAERLRIEIVTLREALEEETAARASLEGQLRVQREETEVLEASLCSLRTEMERVQQEQSKPQLPDLLSEQRAKVLRLQAELETSEQVQRDFVRLSQALQVRLERIRQAETLEQVHSIMDEAPLTDVRDIKDT.

Disordered stretches follow at residues 1–38 (MAAA…AELG), 181–267 (QRRP…ASLV), and 388–414 (RAEQ…PSSV). N-acetylalanine is present on Ala-2. Over residues 29–38 (EGANGEAELG) the composition is skewed to low complexity. The stretch at 34-184 (EAELGELSRL…ELIQEIQRRP (151 aa)) forms a coiled coil. A phosphoserine mark is found at Ser-189, Ser-193, Ser-200, and Ser-204. Residues 245–257 (SSSSLPRSRQGLS) are compositionally biased toward low complexity. The stretch at 292–391 (WEQLQMEGRQ…EENQGLRAEQ (100 aa)) forms a coiled coil. Positions 393-403 (PSSAPQGPQQE) are enriched in low complexity. A coiled-coil region spans residues 423–523 (RTRQEARAQL…LQAELETSEQ (101 aa)).

This sequence belongs to the rabaptin family. As to quaternary structure, heterodimer with RABGEF1. The dimer binds RAB5A that has been activated by GTP-binding. Interacts with SDCCAG8; this interaction is important for ciliogenesis regulation. Interacts with RAB4; this interaction may mediate VEGFR2 cell surface expression.

The protein localises to the cytoplasm. Its subcellular location is the early endosome. It localises to the cytoskeleton. It is found in the microtubule organizing center. The protein resides in the centrosome. The protein localises to the cilium basal body. Plays a role in membrane trafficking and in homotypic early endosome fusion. Participates in arteriogenesis by regulating vascular endothelial growth factor receptor 2/VEGFR2 cell surface expression and endosomal trafficking. By interacting with SDCCAG8, localizes to centrosomes and plays a critical role in ciliogenesis. The protein is Rab GTPase-binding effector protein 2 (RABEP2) of Pongo abelii (Sumatran orangutan).